Consider the following 246-residue polypeptide: Protein crossbronx (246 aa).

The UBC core domain occupies 20-177 (QQEYKILAEY…VQESILESKA (158 aa)).

Belongs to the ubiquitin-conjugating enzyme family. FTS subfamily.

This is Protein crossbronx (cbx) from Drosophila grimshawi (Hawaiian fruit fly).